The chain runs to 171 residues: Putative adenylate kinase (171 aa).

ATP-binding residues include Gly-9, Gly-11, Lys-12, Thr-13, and Thr-14. Positions 28-51 (SLGELIRQKGFVLGRDPIRGYLEA) are NMP. Residues 99–109 (GRGYPEGKVLE) are LID. Residue Arg-100 coordinates ATP.

This sequence belongs to the adenylate kinase family. AK6 subfamily. Interacts with uS11. Not a structural component of 40S pre-ribosomes, but transiently interacts with them by binding to uS11.

The catalysed reaction is AMP + ATP = 2 ADP. It catalyses the reaction ATP + H2O = ADP + phosphate + H(+). Functionally, broad-specificity nucleoside monophosphate (NMP) kinase that catalyzes the reversible transfer of the terminal phosphate group between nucleoside triphosphates and monophosphates. Also has ATPase activity. Involved in the late maturation steps of the 30S ribosomal particles, specifically 16S rRNA maturation. While NMP activity is not required for ribosome maturation, ATPase activity is. Associates transiently with small ribosomal subunit protein uS11. ATP hydrolysis breaks the interaction with uS11. May temporarily remove uS11 from the ribosome to enable a conformational change of the ribosomal RNA that is needed for the final maturation step of the small ribosomal subunit. This chain is Putative adenylate kinase, found in Methanothermobacter thermautotrophicus (strain ATCC 29096 / DSM 1053 / JCM 10044 / NBRC 100330 / Delta H) (Methanobacterium thermoautotrophicum).